The sequence spans 559 residues: 2-isopropylmalate synthase (559 aa).

The Pyruvate carboxyltransferase domain occupies 33–307 (PIWCSSDLRD…NPELDFSDID (275 aa)). The Mg(2+) site is built by Asp42, His246, His248, and Asn282. The tract at residues 439–559 (ANTPYALVSH…SLSEQQAKAA (121 aa)) is regulatory domain.

It belongs to the alpha-IPM synthase/homocitrate synthase family. LeuA type 2 subfamily. In terms of assembly, homodimer. It depends on Mg(2+) as a cofactor.

The protein localises to the cytoplasm. It carries out the reaction 3-methyl-2-oxobutanoate + acetyl-CoA + H2O = (2S)-2-isopropylmalate + CoA + H(+). Its pathway is amino-acid biosynthesis; L-leucine biosynthesis; L-leucine from 3-methyl-2-oxobutanoate: step 1/4. Catalyzes the condensation of the acetyl group of acetyl-CoA with 3-methyl-2-oxobutanoate (2-ketoisovalerate) to form 3-carboxy-3-hydroxy-4-methylpentanoate (2-isopropylmalate). This Pseudomonas fluorescens (strain ATCC BAA-477 / NRRL B-23932 / Pf-5) protein is 2-isopropylmalate synthase.